Here is a 325-residue protein sequence, read N- to C-terminus: ATP synthase gamma chain (325 aa).

This sequence belongs to the ATPase gamma chain family. In terms of assembly, F-type ATPases have 2 components, CF(1) - the catalytic core - and CF(0) - the membrane proton channel. CF(1) has five subunits: alpha(3), beta(3), gamma(1), delta(1), epsilon(1). CF(0) has three main subunits: a, b and c.

The protein resides in the cell membrane. Produces ATP from ADP in the presence of a proton gradient across the membrane. The gamma chain is believed to be important in regulating ATPase activity and the flow of protons through the CF(0) complex. The polypeptide is ATP synthase gamma chain (Corynebacterium urealyticum (strain ATCC 43042 / DSM 7109)).